The primary structure comprises 805 residues: U-box domain-containing protein 32 (805 aa).

2 disordered regions span residues 181 to 205 (SNNR…SEKL) and 226 to 284 (EKDT…EREG). The span at 226-239 (EKDTGQLEREKVEP) shows a compositional bias: basic and acidic residues. Residues 245–257 (FSSGSSSSFGEPV) show a composition bias toward low complexity. Residues 331 to 434 (LEGLCIKESS…EVNALRRLVK (104 aa)) adopt a coiled-coil conformation. A Protein kinase domain is found at 460–718 (FDPSWKLGEG…FIDRMKAPEV (259 aa)). Residues 466–474 (LGEGKYGSV) and K487 each bind ATP. The U-box domain occupies 734 to 805 (RPPSHYLCPI…LAIQDWQNQW (72 aa)).

The protein belongs to the protein kinase superfamily. Ser/Thr protein kinase family.

It carries out the reaction S-ubiquitinyl-[E2 ubiquitin-conjugating enzyme]-L-cysteine + [acceptor protein]-L-lysine = [E2 ubiquitin-conjugating enzyme]-L-cysteine + N(6)-ubiquitinyl-[acceptor protein]-L-lysine.. The protein operates within protein modification; protein ubiquitination. Its function is as follows. Functions as an E3 ubiquitin ligase. This Arabidopsis thaliana (Mouse-ear cress) protein is U-box domain-containing protein 32 (PUB32).